A 74-amino-acid chain; its full sequence is Exodeoxyribonuclease 7 small subunit (74 aa).

Belongs to the XseB family. In terms of assembly, heterooligomer composed of large and small subunits.

It localises to the cytoplasm. It carries out the reaction Exonucleolytic cleavage in either 5'- to 3'- or 3'- to 5'-direction to yield nucleoside 5'-phosphates.. Its function is as follows. Bidirectionally degrades single-stranded DNA into large acid-insoluble oligonucleotides, which are then degraded further into small acid-soluble oligonucleotides. The sequence is that of Exodeoxyribonuclease 7 small subunit from Clostridium botulinum (strain Eklund 17B / Type B).